Reading from the N-terminus, the 692-residue chain is Methionine--tRNA ligase (692 aa).

A 'HIGH' region motif is present at residues Pro-12 to His-22. Residues Cys-143, Cys-146, Cys-156, and Cys-159 each contribute to the Zn(2+) site. Positions Lys-341–Ser-345 match the 'KMSKS' region motif. Lys-344 is a binding site for ATP. Residues Asp-586–Arg-692 enclose the tRNA-binding domain.

It belongs to the class-I aminoacyl-tRNA synthetase family. MetG type 1 subfamily. Homodimer. Requires Zn(2+) as cofactor.

The protein localises to the cytoplasm. It catalyses the reaction tRNA(Met) + L-methionine + ATP = L-methionyl-tRNA(Met) + AMP + diphosphate. In terms of biological role, is required not only for elongation of protein synthesis but also for the initiation of all mRNA translation through initiator tRNA(fMet) aminoacylation. The polypeptide is Methionine--tRNA ligase (Bordetella bronchiseptica (strain ATCC BAA-588 / NCTC 13252 / RB50) (Alcaligenes bronchisepticus)).